A 96-amino-acid polypeptide reads, in one-letter code: uncharacterized protein (96 aa).

An N-linked (GlcNAc...) asparagine glycan is attached at Asn-4. A helical transmembrane segment spans residues Val-59 to Leu-81.

It is found in the membrane. This is an uncharacterized protein from Saccharomyces cerevisiae (strain ATCC 204508 / S288c) (Baker's yeast).